A 76-amino-acid chain; its full sequence is uncharacterized protein (76 aa).

2 EF-hand domains span residues 9-44 (EMDE…LGEN) and 43-76 (ENLT…IHIS).

The protein resides in the cytoplasm. It localises to the nucleus. This is an uncharacterized protein from Schizosaccharomyces pombe (strain 972 / ATCC 24843) (Fission yeast).